A 394-amino-acid polypeptide reads, in one-letter code: Elongation factor Tu 1 (394 aa).

A tr-type G domain is found at 10–204 (KPHVNVGTIG…FLDSYIPEPE (195 aa)). The tract at residues 19-26 (GHVDHGKT) is G1. Residue 19 to 26 (GHVDHGKT) coordinates GTP. Thr-26 is a binding site for Mg(2+). Positions 60–64 (GITIN) are G2. The G3 stretch occupies residues 81-84 (DCPG). GTP is bound by residues 81-85 (DCPGH) and 136-139 (NKCD). The tract at residues 136–139 (NKCD) is G4. The tract at residues 174–176 (SAL) is G5.

This sequence belongs to the TRAFAC class translation factor GTPase superfamily. Classic translation factor GTPase family. EF-Tu/EF-1A subfamily. As to quaternary structure, monomer.

It is found in the cytoplasm. It carries out the reaction GTP + H2O = GDP + phosphate + H(+). Its function is as follows. GTP hydrolase that promotes the GTP-dependent binding of aminoacyl-tRNA to the A-site of ribosomes during protein biosynthesis. In Shigella sonnei (strain Ss046), this protein is Elongation factor Tu 1.